The sequence spans 332 residues: Ketol-acid reductoisomerase (NADP(+)) (332 aa).

Residues 2-182 (AKIYHDLEVS…GATRAGVLET (181 aa)) form the KARI N-terminal Rossmann domain. Residues 25–28 (YGSQ), arginine 48, serine 53, and 83–86 (DTEQ) each bind NADP(+). Histidine 108 is an active-site residue. Glycine 134 contributes to the NADP(+) binding site. A KARI C-terminal knotted domain is found at 183-328 (TFKEETETDL…KVIREMMPWL (146 aa)). Mg(2+) contacts are provided by aspartate 191, glutamate 195, glutamate 227, and glutamate 231. Position 252 (serine 252) interacts with substrate.

The protein belongs to the ketol-acid reductoisomerase family. The cofactor is Mg(2+).

The enzyme catalyses (2R)-2,3-dihydroxy-3-methylbutanoate + NADP(+) = (2S)-2-acetolactate + NADPH + H(+). The catalysed reaction is (2R,3R)-2,3-dihydroxy-3-methylpentanoate + NADP(+) = (S)-2-ethyl-2-hydroxy-3-oxobutanoate + NADPH + H(+). It functions in the pathway amino-acid biosynthesis; L-isoleucine biosynthesis; L-isoleucine from 2-oxobutanoate: step 2/4. Its pathway is amino-acid biosynthesis; L-valine biosynthesis; L-valine from pyruvate: step 2/4. Involved in the biosynthesis of branched-chain amino acids (BCAA). Catalyzes an alkyl-migration followed by a ketol-acid reduction of (S)-2-acetolactate (S2AL) to yield (R)-2,3-dihydroxy-isovalerate. In the isomerase reaction, S2AL is rearranged via a Mg-dependent methyl migration to produce 3-hydroxy-3-methyl-2-ketobutyrate (HMKB). In the reductase reaction, this 2-ketoacid undergoes a metal-dependent reduction by NADPH to yield (R)-2,3-dihydroxy-isovalerate. The polypeptide is Ketol-acid reductoisomerase (NADP(+)) (Dictyoglomus thermophilum (strain ATCC 35947 / DSM 3960 / H-6-12)).